Here is a 515-residue protein sequence, read N- to C-terminus: Galactose/methyl galactoside import ATP-binding protein MglA (515 aa).

2 ABC transporter domains span residues Leu8 to Glu243 and Ile254 to Leu499. Gly40–Ser47 is an ATP binding site.

This sequence belongs to the ABC transporter superfamily. Galactose/methyl galactoside importer (TC 3.A.1.2.3) family. As to quaternary structure, the complex is composed of one ATP-binding protein (MglA), two transmembrane proteins (MglC) and a solute-binding protein (MglB).

Its subcellular location is the cell membrane. The catalysed reaction is D-galactose(out) + ATP + H2O = D-galactose(in) + ADP + phosphate + H(+). It catalyses the reaction methyl beta-D-galactoside(out) + ATP + H2O = methyl beta-D-galactoside(in) + ADP + phosphate + H(+). Part of the ABC transporter complex MglABC involved in galactose/methyl galactoside import. Responsible for energy coupling to the transport system. The protein is Galactose/methyl galactoside import ATP-binding protein MglA of Clostridium perfringens (strain SM101 / Type A).